A 405-amino-acid polypeptide reads, in one-letter code: MATQSISKIVLAYSGGLDTSAIIPWLKENYGDCEVIAFVADIGQEREDLVGIEQKALRSGAASCYVVDLRETFIKDYVYPVLKSGALYEGSYLLGTSMARPLIAKAQVELALELGADALCHGATGKGNDQVRFETTYTALAPQLQVVAPWREWDLRSREALLDYLKGRDIPTTATLEKIYSRDANAWHISTEGGVLESPWSPANQDCWVWTCAPEEAPDQPELVTVGVEKGEVVSVNGVAMTPFGCLQALNALGTRHGVGRIDIVENRLVGIKSRGCYETPGGTIMMAALRGVEQLVLDRDSFQWREKLGQEMSYVVYDGRWFAPLRQSLQAAADALADAVSGEVVIKLYKGQAIAIQKKSVNSLYNEAFATFGEDDVYDHSHAGGFIRLFSLSSRIRALNSAKQ.

ATP-binding positions include 12 to 20 and Ala40; that span reads AYSGGLDTS. The L-citrulline site is built by Tyr92 and Ser97. Gly122 contacts ATP. Residues Thr124, Asn128, and Asp129 each contribute to the L-aspartate site. L-citrulline is bound at residue Asn128. Positions 132, 181, 190, 266, and 278 each coordinate L-citrulline.

This sequence belongs to the argininosuccinate synthase family. Type 1 subfamily. As to quaternary structure, homotetramer.

The protein localises to the cytoplasm. The catalysed reaction is L-citrulline + L-aspartate + ATP = 2-(N(omega)-L-arginino)succinate + AMP + diphosphate + H(+). The protein operates within amino-acid biosynthesis; L-arginine biosynthesis; L-arginine from L-ornithine and carbamoyl phosphate: step 2/3. This chain is Argininosuccinate synthase, found in Edwardsiella ictaluri (strain 93-146).